The primary structure comprises 372 residues: Queuine tRNA-ribosyltransferase (372 aa).

Asp-92 serves as the catalytic Proton acceptor. Residues Asp-92 to Tyr-96, Asp-146, Gln-188, and Gly-215 contribute to the substrate site. The segment at Gly-246 to Glu-252 is RNA binding. The active-site Nucleophile is Asp-265. An RNA binding; important for wobble base 34 recognition region spans residues Thr-270–Arg-274. Cys-303, Cys-305, Cys-308, and His-334 together coordinate Zn(2+).

This sequence belongs to the queuine tRNA-ribosyltransferase family. As to quaternary structure, homodimer. Within each dimer, one monomer is responsible for RNA recognition and catalysis, while the other monomer binds to the replacement base PreQ1. Requires Zn(2+) as cofactor.

The catalysed reaction is 7-aminomethyl-7-carbaguanine + guanosine(34) in tRNA = 7-aminomethyl-7-carbaguanosine(34) in tRNA + guanine. It functions in the pathway tRNA modification; tRNA-queuosine biosynthesis. Functionally, catalyzes the base-exchange of a guanine (G) residue with the queuine precursor 7-aminomethyl-7-deazaguanine (PreQ1) at position 34 (anticodon wobble position) in tRNAs with GU(N) anticodons (tRNA-Asp, -Asn, -His and -Tyr). Catalysis occurs through a double-displacement mechanism. The nucleophile active site attacks the C1' of nucleotide 34 to detach the guanine base from the RNA, forming a covalent enzyme-RNA intermediate. The proton acceptor active site deprotonates the incoming PreQ1, allowing a nucleophilic attack on the C1' of the ribose to form the product. After dissociation, two additional enzymatic reactions on the tRNA convert PreQ1 to queuine (Q), resulting in the hypermodified nucleoside queuosine (7-(((4,5-cis-dihydroxy-2-cyclopenten-1-yl)amino)methyl)-7-deazaguanosine). This chain is Queuine tRNA-ribosyltransferase, found in Prochlorococcus marinus (strain MIT 9312).